The primary structure comprises 264 residues: tRNA (guanine-N(1)-)-methyltransferase (264 aa).

S-adenosyl-L-methionine contacts are provided by residues Gly-125 and 145-150; that span reads LGDFVL.

It belongs to the RNA methyltransferase TrmD family. As to quaternary structure, homodimer.

It localises to the cytoplasm. It catalyses the reaction guanosine(37) in tRNA + S-adenosyl-L-methionine = N(1)-methylguanosine(37) in tRNA + S-adenosyl-L-homocysteine + H(+). Its function is as follows. Specifically methylates guanosine-37 in various tRNAs. The polypeptide is tRNA (guanine-N(1)-)-methyltransferase (Burkholderia lata (strain ATCC 17760 / DSM 23089 / LMG 22485 / NCIMB 9086 / R18194 / 383)).